We begin with the raw amino-acid sequence, 223 residues long: Thiamine-phosphate synthase (223 aa).

4-amino-2-methyl-5-(diphosphooxymethyl)pyrimidine is bound by residues 45 to 49 and Asn77; that span reads QYREK. Mg(2+) contacts are provided by Asp78 and Asp97. Position 116 (Thr116) interacts with 4-amino-2-methyl-5-(diphosphooxymethyl)pyrimidine. Residue 142-144 participates in 2-[(2R,5Z)-2-carboxy-4-methylthiazol-5(2H)-ylidene]ethyl phosphate binding; that stretch reads SYT. Residue Lys145 participates in 4-amino-2-methyl-5-(diphosphooxymethyl)pyrimidine binding. Residues Gly173 and 193–194 contribute to the 2-[(2R,5Z)-2-carboxy-4-methylthiazol-5(2H)-ylidene]ethyl phosphate site; that span reads VT.

It belongs to the thiamine-phosphate synthase family. Mg(2+) serves as cofactor.

The enzyme catalyses 2-[(2R,5Z)-2-carboxy-4-methylthiazol-5(2H)-ylidene]ethyl phosphate + 4-amino-2-methyl-5-(diphosphooxymethyl)pyrimidine + 2 H(+) = thiamine phosphate + CO2 + diphosphate. The catalysed reaction is 2-(2-carboxy-4-methylthiazol-5-yl)ethyl phosphate + 4-amino-2-methyl-5-(diphosphooxymethyl)pyrimidine + 2 H(+) = thiamine phosphate + CO2 + diphosphate. It carries out the reaction 4-methyl-5-(2-phosphooxyethyl)-thiazole + 4-amino-2-methyl-5-(diphosphooxymethyl)pyrimidine + H(+) = thiamine phosphate + diphosphate. The protein operates within cofactor biosynthesis; thiamine diphosphate biosynthesis; thiamine phosphate from 4-amino-2-methyl-5-diphosphomethylpyrimidine and 4-methyl-5-(2-phosphoethyl)-thiazole: step 1/1. Functionally, condenses 4-methyl-5-(beta-hydroxyethyl)thiazole monophosphate (THZ-P) and 2-methyl-4-amino-5-hydroxymethyl pyrimidine pyrophosphate (HMP-PP) to form thiamine monophosphate (TMP). The protein is Thiamine-phosphate synthase of Dictyoglomus turgidum (strain DSM 6724 / Z-1310).